The chain runs to 468 residues: Probable Xaa-Pro aminopeptidase PEPP (468 aa).

Aspartate 264, aspartate 275, glutamate 398, and glutamate 438 together coordinate Mn(2+).

The protein belongs to the peptidase M24B family. The cofactor is Mn(2+).

It carries out the reaction Release of any N-terminal amino acid, including proline, that is linked to proline, even from a dipeptide or tripeptide.. Functionally, catalyzes the removal of a penultimate prolyl residue from the N-termini of peptides. The chain is Probable Xaa-Pro aminopeptidase PEPP (PEPP) from Paracoccidioides lutzii (strain ATCC MYA-826 / Pb01) (Paracoccidioides brasiliensis).